The chain runs to 757 residues: 5-methyltetrahydropteroyltriglutamate--homocysteine methyltransferase (757 aa).

5-methyltetrahydropteroyltri-L-glutamate is bound by residues 16–19 and Lys-112; that span reads RELK. L-homocysteine is bound by residues 432-434 and Glu-485; that span reads IGS. L-methionine contacts are provided by residues 432-434 and Glu-485; that span reads IGS. Residues 516–517 and Trp-562 each bind 5-methyltetrahydropteroyltri-L-glutamate; that span reads RC. Residue Asp-600 participates in L-homocysteine binding. Asp-600 serves as a coordination point for L-methionine. Glu-606 contacts 5-methyltetrahydropteroyltri-L-glutamate. Residues His-642, Cys-644, and Glu-666 each coordinate Zn(2+). The active-site Proton donor is His-695. A Zn(2+)-binding site is contributed by Cys-727.

The protein belongs to the vitamin-B12 independent methionine synthase family. Zn(2+) is required as a cofactor.

It catalyses the reaction 5-methyltetrahydropteroyltri-L-glutamate + L-homocysteine = tetrahydropteroyltri-L-glutamate + L-methionine. Its pathway is amino-acid biosynthesis; L-methionine biosynthesis via de novo pathway; L-methionine from L-homocysteine (MetE route): step 1/1. Its function is as follows. Catalyzes the transfer of a methyl group from 5-methyltetrahydrofolate to homocysteine resulting in methionine formation. This Actinobacillus pleuropneumoniae serotype 5b (strain L20) protein is 5-methyltetrahydropteroyltriglutamate--homocysteine methyltransferase.